The following is a 256-amino-acid chain: Floral homeotic protein APETALA 1 (256 aa).

One can recognise an MADS-box domain in the interval 1–61 (MGRGRVQLKR…GKLFEYSTDS (61 aa)). The 91-residue stretch at 88–178 (NTNWSMEYNR…SKQIKEREKI (91 aa)) folds into the K-box domain. A coiled-coil region spans residues 88–185 (NTNWSMEYNR…EKILRAQQEQ (98 aa)).

In terms of assembly, homodimer capable of binding to CArG-box sequences. Heterodimer with SEP3, AP1 and SVP. Binds AP3/PI to form a ternary complex. Interacts with the SEU-LUG corepressor complex when complexed to AGL24 or SVP. Interacts with AGL15 and AGL16. Interacts with TT16/AGL32. Expressed in young flower primordia, later becomes localized to sepals and petals.

It localises to the nucleus. Transcription factor that promotes early floral meristem identity in synergy with LEAFY. Is required subsequently for the transition of an inflorescence meristem into a floral meristem. Is indispensable for normal development of sepals and petals in flowers. Positively regulates the B class homeotic proteins APETALA3 and PISTILLATA with the cooperation of LEAFY and UFO. Interacts with SEPALLATA3 or AP3/PI heterodimer to form complexes that could be involved in genes regulation during floral meristem development. Positively regulates AGAMOUS in cooperation with LEAFY. Displays a redundant function with CAULIFLOWER in the up-regulation of LEAFY. Together with AGL24 and SVP, controls the identity of the floral meristem and regulates expression of class B, C and E genes. Represses flowering time genes AGL24, SVP and SOC1 in emerging floral meristems. The protein is Floral homeotic protein APETALA 1 (AP1) of Arabidopsis thaliana (Mouse-ear cress).